A 634-amino-acid chain; its full sequence is Glutamyl-tRNA(Gln) amidotransferase subunit E (634 aa).

It belongs to the GatB/GatE family. GatE subfamily. As to quaternary structure, heterodimer of GatD and GatE.

It catalyses the reaction L-glutamyl-tRNA(Gln) + L-glutamine + ATP + H2O = L-glutaminyl-tRNA(Gln) + L-glutamate + ADP + phosphate + H(+). Functionally, allows the formation of correctly charged Gln-tRNA(Gln) through the transamidation of misacylated Glu-tRNA(Gln) in organisms which lack glutaminyl-tRNA synthetase. The reaction takes place in the presence of glutamine and ATP through an activated gamma-phospho-Glu-tRNA(Gln). The GatDE system is specific for glutamate and does not act on aspartate. The protein is Glutamyl-tRNA(Gln) amidotransferase subunit E of Sulfolobus acidocaldarius (strain ATCC 33909 / DSM 639 / JCM 8929 / NBRC 15157 / NCIMB 11770).